The chain runs to 133 residues: Male-specific protein scotti (133 aa).

Residues 11 to 57 (FPSNGLGNNNNDPNQQRGERPRQPHPDLGWILDAPNEPPRNRNPLLY) are disordered. The span at 14-24 (NGLGNNNNDPN) shows a compositional bias: low complexity. The N-linked (GlcNAc...) asparagine glycan is linked to Asn-83.

Belongs to the male-specific scotti family.

Functionally, post-meiotically transcribed gene that has a role in late spermiogenesis; required for actin cone progression during spermatid individualization. The chain is Male-specific protein scotti from Drosophila persimilis (Fruit fly).